Reading from the N-terminus, the 143-residue chain is Putative complexin-1 (143 aa).

The interval 15–71 (NEVTGGLGLKDDGGEKTETGEDPEVVAARLEQEERRKEKHRKMEQEREKMRQGIRDK) is disordered. Basic and acidic residues-rich tracts occupy residues 23 to 33 (LKDDGGEKTET) and 44 to 71 (LEQE…IRDK). The stretch at 40–71 (VAARLEQEERRKEKHRKMEQEREKMRQGIRDK) forms a coiled coil.

The protein belongs to the complexin/synaphin family.

The protein localises to the cytoplasm. It localises to the cytosol. Functionally, positively regulates a late step in synaptic vesicle exocytosis. The chain is Putative complexin-1 (cpx-1) from Caenorhabditis briggsae.